The following is a 149-amino-acid chain: SsrA-binding protein (149 aa).

This sequence belongs to the SmpB family.

Its subcellular location is the cytoplasm. Required for rescue of stalled ribosomes mediated by trans-translation. Binds to transfer-messenger RNA (tmRNA), required for stable association of tmRNA with ribosomes. tmRNA and SmpB together mimic tRNA shape, replacing the anticodon stem-loop with SmpB. tmRNA is encoded by the ssrA gene; the 2 termini fold to resemble tRNA(Ala) and it encodes a 'tag peptide', a short internal open reading frame. During trans-translation Ala-aminoacylated tmRNA acts like a tRNA, entering the A-site of stalled ribosomes, displacing the stalled mRNA. The ribosome then switches to translate the ORF on the tmRNA; the nascent peptide is terminated with the 'tag peptide' encoded by the tmRNA and targeted for degradation. The ribosome is freed to recommence translation, which seems to be the essential function of trans-translation. The polypeptide is SsrA-binding protein (Wolbachia sp. subsp. Brugia malayi (strain TRS)).